Here is a 366-residue protein sequence, read N- to C-terminus: Polyprenyl transferase ausN (366 aa).

Helical transmembrane passes span 97–117 (VVGIAYSAATAPTKLPLDLLL), 121–141 (LLLTLWSFILRSAGCAWNDLI), 164–184 (LPTATIFTACLFALGCSLFLF), 215–235 (LILVNIAWAIPMAMHSLGVEP), 239–259 (ILSSICLCVFIATVIVLIDLV), 287–307 (LAYSLFAISTLALLFGGLLGG), 308–328 (LRAPFVVFSVGGHIVGFWTFL), and 346–366 (SCLMASIFWLLGLGIEYAVRV).

It belongs to the UbiA prenyltransferase family. Requires Mg(2+) as cofactor.

Its subcellular location is the membrane. It carries out the reaction 3,5-dimethylorsellinate + (2E,6E)-farnesyl diphosphate = (3R)-3-farnesyl-6-hydroxy-2,3,5-trimethyl-4-oxocyclohexa-1,5-diene-1-carboxylate + diphosphate + H(+). Its pathway is secondary metabolite biosynthesis; terpenoid biosynthesis. Functionally, polyprenyl transferase; part of the gene cluster that mediates the biosynthesis of calidodehydroaustin, a fungal meroterpenoid. The first step of the pathway is the synthesis of 3,5-dimethylorsellinic acid by the polyketide synthase ausA. 3,5-dimethylorsellinic acid is then prenylated by the polyprenyl transferase ausN. Further epoxidation by the FAD-dependent monooxygenase ausM and cyclization by the probable terpene cyclase ausL lead to the formation of protoaustinoid A. Protoaustinoid A is then oxidized to spiro-lactone preaustinoid A3 by the combined action of the FAD-binding monooxygenases ausB and ausC, and the dioxygenase ausE. Acid-catalyzed keto-rearrangement and ring contraction of the tetraketide portion of preaustinoid A3 by ausJ lead to the formation of preaustinoid A4. The aldo-keto reductase ausK, with the help of ausH, is involved in the next step by transforming preaustinoid A4 into isoaustinone which is in turn hydroxylated by the P450 monooxygenase ausI to form austinolide. The cytochrome P450 monooxygenase ausG modifies austinolide to austinol. Austinol is further acetylated to austin by the O-acetyltransferase ausP, which spontaneously changes to dehydroaustin. The cytochrome P450 monooxygenase ausR then converts dehydroaustin is into 7-dehydrodehydroaustin. The hydroxylation catalyzed by ausR permits the O-acetyltransferase ausQ to add an additional acetyl group to the molecule, leading to the formation of acetoxydehydroaustin. The short chain dehydrogenase ausT catalyzes the reduction of the double bond present between carbon atoms 1 and 2 to convert 7-dehydrodehydroaustin into 1,2-dihydro-7-hydroxydehydroaustin. AusQ catalyzes not only an acetylation reaction but also the addition of the PKS ausV diketide product to 1,2-dihydro-7-hydroxydehydroaustin, forming precalidodehydroaustin. Finally, the iron/alpha-ketoglutarate-dependent dioxygenase converts precalidodehydroaustin into calidodehydroaustin. The protein is Polyprenyl transferase ausN of Aspergillus calidoustus.